The primary structure comprises 44 residues: Large ribosomal subunit protein bL34 (44 aa).

Belongs to the bacterial ribosomal protein bL34 family.

The protein is Large ribosomal subunit protein bL34 of Neorickettsia sennetsu (strain ATCC VR-367 / Miyayama) (Ehrlichia sennetsu).